Here is a 316-residue protein sequence, read N- to C-terminus: Homoserine kinase (316 aa).

Pro-97–Ser-107 is a binding site for ATP.

Belongs to the GHMP kinase family. Homoserine kinase subfamily.

Its subcellular location is the cytoplasm. It catalyses the reaction L-homoserine + ATP = O-phospho-L-homoserine + ADP + H(+). Its pathway is amino-acid biosynthesis; L-threonine biosynthesis; L-threonine from L-aspartate: step 4/5. In terms of biological role, catalyzes the ATP-dependent phosphorylation of L-homoserine to L-homoserine phosphate. The protein is Homoserine kinase of Prochlorococcus marinus (strain MIT 9303).